A 385-amino-acid chain; its full sequence is Probable di-N-acetylchitobiase 2 (385 aa).

The signal sequence occupies residues 1–15 (MRIILLLFLIVFVVA). In terms of domain architecture, GH18 spans 16–377 (QSSSSSSSSG…DALASFFPQS (362 aa)). N-linked (GlcNAc...) asparagine glycosylation is found at Asn-51 and Asn-101. The active-site Proton donor is Glu-129. 3 N-linked (GlcNAc...) asparagine glycosylation sites follow: Asn-223, Asn-272, and Asn-296.

Belongs to the glycosyl hydrolase 18 family.

Its subcellular location is the lysosome. Its function is as follows. Involved in the degradation of asparagine-linked glycoproteins. May hydrolyze of N-acetyl-beta-D-glucosamine (1-4)N-acetylglucosamine chitobiose core from the reducing end of the bond. The protein is Probable di-N-acetylchitobiase 2 (ctbs2) of Dictyostelium discoideum (Social amoeba).